Reading from the N-terminus, the 1821-residue chain is Latent-transforming growth factor beta-binding protein 2 (1821 aa).

An N-terminal signal peptide occupies residues 1 to 35 (MRPRTKARSPGRALRNPWRGFLPLTLALFVGAGHA). Disordered regions lie at residues 38-58 (DPVGRYEPAGGDANRLRRPGG) and 81-165 (GLQP…RLTG). The interval 94 to 115 (SPRRPTEAEARRPSRAQQSRRV) is heparin-binding. Low complexity-rich tracts occupy residues 108–120 (RAQQSRRVQPPAQ) and 129–145 (QQQPAPRTRAAPALPRL). N-linked (GlcNAc...) asparagine glycosylation occurs at Asn181. Positions 187–219 (IKPVCEPPCQNRGSCSRPQLCVCRSGFRGARCE) constitute an EGF-like 1 domain. 3 cysteine pairs are disulfide-bonded: Cys191–Cys201, Cys195–Cys207, and Cys209–Cys218. The interval 229–339 (PQNSRLAPRR…AVPLEHPSSP (111 aa)) is disordered. The segment at 232–249 (SRLAPRRWAERSPNLRRS) is heparin-binding. Pro residues predominate over residues 262–274 (PPAPQSPPAPQSP). Composition is skewed to polar residues over residues 280 to 292 (SGLSQTHPSQQHV) and 304 to 314 (ATASSQLSSNA). Asn343 carries N-linked (GlcNAc...) asparagine glycosylation. 344 to 354 (LTEKIKKIKIV) contributes to the heparin binding site. A Cell attachment site motif is present at residues 375–377 (RGD). The 33-residue stretch at 396 to 428 (RIYFCQIPCLNGGRCIGRDECWCPANSTGKFCH) folds into the EGF-like 2 domain. 3 cysteine pairs are disulfide-bonded: Cys400–Cys410, Cys404–Cys416, and Cys418–Cys427. Asn421 carries an N-linked (GlcNAc...) asparagine glycan. Residue Ser506 is modified to Phosphoserine. The disordered stretch occupies residues 510–544 (RPPPWLPASPGHSLWDSNNIPARSGEPPRPLPPAA). In terms of domain architecture, TB 1 spans 552-604 (GRCYLNTVNGQCANPLLELTTQEDCCGSVGAFWGVTLCAPCPPRPASPVIENG). Cystine bridges form between Cys554-Cys576, Cys563-Cys589, and Cys577-Cys592. Asn616 carries N-linked (GlcNAc...) asparagine glycosylation. The 41-residue stretch at 622 to 662 (DINECLTLGLCKDAECVNTRGSYLCTCRPGLMLDPSRSRCV) folds into the EGF-like 3; calcium-binding domain. Cystine bridges form between Cys626–Cys637, Cys632–Cys646, Cys648–Cys661, Cys674–Cys696, Cys683–Cys709, Cys697–Cys712, and Cys698–Cys724. Residues 672 to 724 (GLCYRSLGPGTCTLPLAQRITKQICCCSRVGKAWGSECEKCPLPGTEAFREIC) enclose the TB 2 domain. The span at 744-757 (AEEEELARPPREQG) shows a compositional bias: basic and acidic residues. Residues 744 to 772 (AEEEELARPPREQGQRSSGALPGPAERQP) form a disordered region. The N-linked (GlcNAc...) asparagine glycan is linked to Asn811. In terms of domain architecture, EGF-like 4 spans 844–886 (GIDRCAAGATNVCGPGTCVNLPDGYRCVCSPGYQLHPSQAYCT). 49 disulfide bridges follow: Cys848/Cys861, Cys856/Cys870, Cys872/Cys885, Cys891/Cys902, Cys896/Cys911, Cys913/Cys928, Cys934/Cys945, Cys940/Cys954, Cys956/Cys968, Cys974/Cys985, Cys980/Cys994, Cys997/Cys1008, Cys1014/Cys1025, Cys1020/Cys1034, Cys1036/Cys1049, Cys1055/Cys1066, Cys1061/Cys1075, Cys1078/Cys1091, Cys1097/Cys1108, Cys1103/Cys1117, Cys1120/Cys1133, Cys1139/Cys1151, Cys1146/Cys1160, Cys1162/Cys1174, Cys1180/Cys1192, Cys1186/Cys1201, Cys1203/Cys1216, Cys1222/Cys1233, Cys1228/Cys1242, Cys1244/Cys1257, Cys1263/Cys1276, Cys1271/Cys1285, Cys1289/Cys1301, Cys1307/Cys1319, Cys1313/Cys1328, Cys1330/Cys1343, Cys1349/Cys1361, Cys1356/Cys1370, Cys1372/Cys1386, Cys1413/Cys1436, Cys1423/Cys1448, Cys1437/Cys1451, Cys1438/Cys1463, Cys1489/Cys1502, Cys1497/Cys1511, Cys1513/Cys1526, Cys1532/Cys1542, Cys1537/Cys1551, and Cys1553/Cys1566. Residues 887–929 (DDNECLRDPCKGKGRCINRVGSYSCFCYPGYTLATSGATQECQ) enclose the EGF-like 5; calcium-binding domain. The EGF-like 6; calcium-binding domain occupies 930–969 (DINECEQPGVCSGGQCTNTEGSYHCECDQGYIMVRKGHCQ). Positions 970-1009 (DINECRHPGTCPDGRCVNSPGSYTCLACEEGYRGQSGSCV) constitute an EGF-like 7; calcium-binding domain. One can recognise an EGF-like 8; calcium-binding domain in the interval 1010 to 1050 (DVNECLTPGVCAHGKCTNLEGSFRCSCEQGYEVTSDEKGCQ). One can recognise an EGF-like 9; calcium-binding domain in the interval 1051–1092 (DVDECASRASCPTGLCLNTEGSFACSACENGYWVNEDGTACE). In terms of domain architecture, EGF-like 10; calcium-binding spans 1093 to 1134 (DLDECAFPGVCPSGVCTNTAGSFSCKDCDGGYRPSPLGDSCE). The EGF-like 11; calcium-binding domain maps to 1135-1175 (DVDECEDPQSSCLGGECKNTVGSYQCLCPQGFQLANGTVCE). The N-linked (GlcNAc...) asparagine glycan is linked to Asn1170. The EGF-like 12; calcium-binding domain maps to 1176-1217 (DVNECMGEEHCAPHGECLNSHGSFFCLCAPGFVSAEGGTSCQ). The region spanning 1218 to 1258 (DVDECATTDPCVGGHCVNTEGSFNCLCETGFQPSPESGECV) is the EGF-like 13; calcium-binding domain. Positions 1259 to 1302 (DIDECEDYGDPVCGTWKCENSPGSYRCVLGCQPGFHMAPNGDCI) constitute an EGF-like 14; calcium-binding domain. Residues 1303 to 1344 (DIDECANDTMCGSHGFCDNTDGSFRCLCDQGFEISPSGWDCV) enclose the EGF-like 15; calcium-binding domain. Residue Asn1309 is glycosylated (N-linked (GlcNAc...) asparagine). The 43-residue stretch at 1345 to 1387 (DVNECELMLAVCGAALCENVEGSFLCLCASDLEEYDAQEGHCR) folds into the EGF-like 16; calcium-binding domain. The TB 3 domain maps to 1411–1463 (MDCYSGQKGHAPCSSVLGRNTTQAECCCTQGASWGDACDLCPSEDSAEFSEIC). Asn1430 carries an N-linked (GlcNAc...) asparagine glycan. Positions 1485–1527 (DADECVIFGPGLCPNGRCLNTVPGYVCLCNPGFHYDASHKKCE) constitute an EGF-like 17; calcium-binding domain. The 40-residue stretch at 1528 to 1567 (DHDECQDLACENGECVNTEGSFHCFCSPPLTLDLSQQRCM) folds into the EGF-like 18; calcium-binding domain. Asn1568 is a glycosylation site (N-linked (GlcNAc...) asparagine). In terms of domain architecture, TB 4 spans 1584 to 1636 (DICWKKVTNDVCSEPLRGHRTTYTECCCQDGEAWSQQCALCPPRSSEVYAQLC). 10 disulfides stabilise this stretch: Cys1586–Cys1609, Cys1595–Cys1621, Cys1610–Cys1624, Cys1611–Cys1636, Cys1737–Cys1748, Cys1743–Cys1757, Cys1759–Cys1772, Cys1778–Cys1793, Cys1788–Cys1802, and Cys1804–Cys1817. The segment at 1639-1821 (ARIEAEREAG…AGPPHCTAKE (183 aa)) is C-terminal domain. The EGF-like 19; calcium-binding domain occupies 1733-1773 (QAEECGILNGCENGRCVRVREGYTCDCFEGFQLDAAHMACV). An EGF-like 20; calcium-binding domain is found at 1774–1818 (DVNECDDLNGPAVLCVHGYCENTEGSYRCHCSPGYVAEAGPPHCT).

The protein belongs to the LTBP family. Forms part of the large latent transforming growth factor beta precursor complex; removal is essential for activation of complex. Interacts with SDC4. Interacts (via C-terminal domain) with FBN1 (via N-terminal domain) in a Ca(+2)-dependent manner. In terms of processing, N-Glycosylated. Contains hydroxylated asparagine residues. Expressed in the aorta (at protein level). Expressed in lung, weakly expressed in heart, placenta, liver and skeletal muscle.

It is found in the secreted. It localises to the extracellular space. The protein localises to the extracellular matrix. Functionally, may play an integral structural role in elastic-fiber architectural organization and/or assembly. This is Latent-transforming growth factor beta-binding protein 2 (LTBP2) from Homo sapiens (Human).